The primary structure comprises 483 residues: 3-isopropylmalate dehydratase large subunit (483 aa).

Residues Cys-361, Cys-424, and Cys-427 each contribute to the [4Fe-4S] cluster site.

The protein belongs to the aconitase/IPM isomerase family. LeuC type 1 subfamily. As to quaternary structure, heterodimer of LeuC and LeuD. Requires [4Fe-4S] cluster as cofactor.

It carries out the reaction (2R,3S)-3-isopropylmalate = (2S)-2-isopropylmalate. The protein operates within amino-acid biosynthesis; L-leucine biosynthesis; L-leucine from 3-methyl-2-oxobutanoate: step 2/4. Its function is as follows. Catalyzes the isomerization between 2-isopropylmalate and 3-isopropylmalate, via the formation of 2-isopropylmaleate. This chain is 3-isopropylmalate dehydratase large subunit, found in Polaromonas naphthalenivorans (strain CJ2).